Reading from the N-terminus, the 256-residue chain is Non-structural protein 1 (256 aa).

The protein localises to the host cytoplasm. It localises to the host perinuclear region. Its function is as follows. Plays a role in inhibition of the host innate immune system by counteracting the type I interferon signaling. The protein is Non-structural protein 1 of Infectious salmon anemia virus (isolate Atlantic salmon/Norway/810/9/99) (ISAV).